The sequence spans 1777 residues: Fatty acid synthase subunit alpha (1777 aa).

Residues 101–124 (APVESADNEPAQPAASSTPAAPAP) are disordered. Positions 110–120 (PAQPAASSTPA) are enriched in low complexity. A Carrier domain is found at 151-237 (LSAIDVVISI…KVMGGHIDRL (87 aa)). Ser-186 bears the O-(pantetheine 4'-phosphoryl)serine mark. The ketoreductase (KR) domain stretch occupies residues 563–803 (FTGRRVLVTG…ILSLLSGDIL (241 aa)). The 533-residue stretch at 1007–1539 (KEIMHEVVID…QKGGLVVGIA (533 aa)) folds into the Ketosynthase family 3 (KS3) domain. Residues Cys-1193, His-1424, and His-1465 each act as for beta-ketoacyl synthase activity in the active site. Asp-1661 provides a ligand contact to Mg(2+). Acetyl-CoA-binding positions include 1661–1663 (DIE), 1706–1716 (EAIFKSLQIPS), 1730–1734 (SNGAQ), and 1760–1762 (ITH).

This sequence belongs to the thiolase-like superfamily. Fungal fatty acid synthetase subunit alpha family. As to quaternary structure, fatty acid synthase is composed of alpha and beta subunits.

It catalyses the reaction acetyl-CoA + n malonyl-CoA + 2n NADPH + 4n H(+) = a long-chain-acyl-CoA + n CoA + n CO2 + 2n NADP(+).. The catalysed reaction is a fatty acyl-[ACP] + malonyl-[ACP] + H(+) = a 3-oxoacyl-[ACP] + holo-[ACP] + CO2. It carries out the reaction a (3R)-hydroxyacyl-[ACP] + NADP(+) = a 3-oxoacyl-[ACP] + NADPH + H(+). Its pathway is secondary metabolite biosynthesis. Functionally, fatty acid synthase alpha subunit; part of the gene cluster that mediates the biosynthesis of oryzines, natural products with an unusual maleidride backbone. The two subunits of the fungal fatty acid synthase oryfasA and oryfasB probably form octenoic acid. This fatty acid is most likely activated by the acyl-CoA ligase oryP to give octenyl-CoA before the citrate synthase-like protein oryE catalyzes condensation with oxaloacetate to form tricarboxylic acid. The next steps of the pathways are conjectural, but a favorite possible route has been proposed, beginning with decarboxylation and concomitant dehydration by the decarboxylase oryM, followed by tautomerization, which may lead to the production of a diene intermediate. Reduction of this diene intermediate could give the known metabolite piliformic acid. On the pathway to oryzine B and oryzine A, however, hydroxylation of the diene by the alpha-ketoglutarate-dependent dioxygenase oryG and lactonisation by the lactonohydrolases oryH or oryL could give oryzine B directly. Finally, enoyl reduction by the dehydrogenase oryD would then convert oryzine B into oryzine A. The polypeptide is Fatty acid synthase subunit alpha (Aspergillus oryzae (strain ATCC 42149 / RIB 40) (Yellow koji mold)).